Consider the following 309-residue polypeptide: Histone-lysine N-methyltransferase SETMAR (309 aa).

Residues 74–137 (PGCACIETPC…RCRNRVVQNG (64 aa)) enclose the Pre-SET domain. Cys-76, Cys-78, Cys-83, Cys-88, Cys-90, Cys-119, Cys-123, Cys-125, and Cys-129 together coordinate Zn(2+). One can recognise an SET domain in the interval 140–264 (FLLQVFQTEK…PGEELSYDYS (125 aa)). Residues 150–152 (KGW), Tyr-193, Arg-221, and 224–225 (NH) contribute to the S-adenosyl-L-methionine site. Zn(2+)-binding residues include Cys-227, Cys-288, Cys-290, and Cys-295. One can recognise a Post-SET domain in the interval 284 to 300 (PRKPCYCGAQSCTTFLP).

Belongs to the class V-like SAM-binding methyltransferase superfamily.

Its subcellular location is the nucleus. The protein resides in the chromosome. It carries out the reaction L-lysyl(36)-[histone H3] + 2 S-adenosyl-L-methionine = N(6),N(6)-dimethyl-L-lysyl(36)-[histone H3] + 2 S-adenosyl-L-homocysteine + 2 H(+). In terms of biological role, histone methyltransferase that methylates 'Lys-4' and 'Lys-36' of histone H3, 2 specific tags for epigenetic transcriptional activation. Specifically mediates dimethylation of H3 'Lys-36'. The protein is Histone-lysine N-methyltransferase SETMAR of Mus musculus (Mouse).